Here is a 414-residue protein sequence, read N- to C-terminus: CinA-like protein (414 aa).

This sequence belongs to the CinA family.

This chain is CinA-like protein, found in Akkermansia muciniphila (strain ATCC BAA-835 / DSM 22959 / JCM 33894 / BCRC 81048 / CCUG 64013 / CIP 107961 / Muc).